A 362-amino-acid polypeptide reads, in one-letter code: 3-dehydroquinate synthase (362 aa).

NAD(+)-binding positions include 70–75 (DGESYK), 104–108 (GVVGD), 128–129 (TT), Lys-141, and Lys-150. Zn(2+) is bound by residues Glu-183, His-246, and His-263.

The protein belongs to the sugar phosphate cyclases superfamily. Dehydroquinate synthase family. The cofactor is Co(2+). Requires Zn(2+) as cofactor. It depends on NAD(+) as a cofactor.

Its subcellular location is the cytoplasm. It carries out the reaction 7-phospho-2-dehydro-3-deoxy-D-arabino-heptonate = 3-dehydroquinate + phosphate. The protein operates within metabolic intermediate biosynthesis; chorismate biosynthesis; chorismate from D-erythrose 4-phosphate and phosphoenolpyruvate: step 2/7. In terms of biological role, catalyzes the conversion of 3-deoxy-D-arabino-heptulosonate 7-phosphate (DAHP) to dehydroquinate (DHQ). The sequence is that of 3-dehydroquinate synthase from Saccharophagus degradans (strain 2-40 / ATCC 43961 / DSM 17024).